Here is a 699-residue protein sequence, read N- to C-terminus: Elongation factor G (699 aa).

A tr-type G domain is found at 8-283; it reads EHIRNIGICA…AVVDFLPSPI (276 aa). GTP contacts are provided by residues 17 to 24, 81 to 85, and 135 to 138; these read AHIDAGKT, DTPGH, and NKMD.

This sequence belongs to the TRAFAC class translation factor GTPase superfamily. Classic translation factor GTPase family. EF-G/EF-2 subfamily.

Its subcellular location is the cytoplasm. Catalyzes the GTP-dependent ribosomal translocation step during translation elongation. During this step, the ribosome changes from the pre-translocational (PRE) to the post-translocational (POST) state as the newly formed A-site-bound peptidyl-tRNA and P-site-bound deacylated tRNA move to the P and E sites, respectively. Catalyzes the coordinated movement of the two tRNA molecules, the mRNA and conformational changes in the ribosome. The protein is Elongation factor G of Rickettsia helvetica.